A 163-amino-acid chain; its full sequence is Large ribosomal subunit protein uL10 (163 aa).

It belongs to the universal ribosomal protein uL10 family. As to quaternary structure, part of the ribosomal stalk of the 50S ribosomal subunit. The N-terminus interacts with L11 and the large rRNA to form the base of the stalk. The C-terminus forms an elongated spine to which L12 dimers bind in a sequential fashion forming a multimeric L10(L12)X complex.

Functionally, forms part of the ribosomal stalk, playing a central role in the interaction of the ribosome with GTP-bound translation factors. The polypeptide is Large ribosomal subunit protein uL10 (rplJ) (Pasteurella multocida (strain Pm70)).